Consider the following 95-residue polypeptide: Large ribosomal subunit protein uL23c (95 aa).

The protein belongs to the universal ribosomal protein uL23 family. In terms of assembly, part of the 50S ribosomal subunit.

It localises to the plastid. The protein localises to the chloroplast. Binds to 23S rRNA. This is Large ribosomal subunit protein uL23c (rpl23) from Chlamydomonas reinhardtii (Chlamydomonas smithii).